A 580-amino-acid polypeptide reads, in one-letter code: Phosphatase and actin regulator 1 (580 aa).

A phosphoserine mark is found at serine 67 and serine 78. Position 104 is a phosphothreonine (threonine 104). The Nuclear localization signal signature appears at 108–129; the sequence is RRRSKFANLGRIFKPWKWRKKK. An RPEL 1 repeat occupies 138-163; it reads AALERKISMRQSREELIKRGVLKEIY. Disordered regions lie at residues 331–355 and 376–410; these read EQRV…TKAG and KENV…SSLY. Over residues 335 to 345 the composition is skewed to polar residues; that stretch reads PCSTSYHSSGL. Residues 395–407 are compositionally biased toward acidic residues; the sequence is EEEEEEEDEDDDS. RPEL repeat units follow at residues 422–447, 460–484, and 498–523; these read DSLA…PRQT, TKLT…LKPR, and RRLT…IRFS. Residues 462–494 are disordered; that stretch reads LTRRLSQRPTAEELEQRNILKPRNEQEEQEEKR. A Phosphoserine modification is found at serine 467. Over residues 471–494 the composition is skewed to basic and acidic residues; sequence TAEELEQRNILKPRNEQEEQEEKR. Serine 505 carries the phosphoserine modification.

The protein belongs to the phosphatase and actin regulator family. In terms of assembly, interacts (via RPEL repeats) with ACTA1 and PPP1CA; ACTA1 and PPP1CA compete for the same binding site. In terms of tissue distribution, detected in umbilical vein endothelial cells.

The protein localises to the cytoplasm. It localises to the synapse. The protein resides in the nucleus. Binds actin monomers (G actin) and plays a role in multiple processes including the regulation of actin cytoskeleton dynamics, actin stress fibers formation, cell motility and survival, formation of tubules by endothelial cells, and regulation of PPP1CA activity. Involved in the regulation of cortical neuron migration and dendrite arborization. This Homo sapiens (Human) protein is Phosphatase and actin regulator 1 (PHACTR1).